Here is a 343-residue protein sequence, read N- to C-terminus: Protein RecA (343 aa).

64 to 71 contacts ATP; sequence GPESSGKT.

This sequence belongs to the RecA family.

It localises to the cytoplasm. Functionally, can catalyze the hydrolysis of ATP in the presence of single-stranded DNA, the ATP-dependent uptake of single-stranded DNA by duplex DNA, and the ATP-dependent hybridization of homologous single-stranded DNAs. It interacts with LexA causing its activation and leading to its autocatalytic cleavage. This chain is Protein RecA, found in Bacillus cereus (strain ATCC 10987 / NRS 248).